Consider the following 55-residue polypeptide: Riparin-1.5 acid (55 aa).

The signal sequence occupies residues methionine 1 to alanine 15. Positions glutamine 16–arginine 41 are excised as a propeptide. Cysteine 47 and cysteine 53 are disulfide-bonded. Positions asparagine 54–histidine 55 are excised as a propeptide.

In terms of tissue distribution, expressed by the skin glands.

Its subcellular location is the secreted. The polypeptide is Riparin-1.5 acid (Crinia riparia (Streambank froglet)).